Consider the following 95-residue polypeptide: Feather keratin B-4 (95 aa).

Ser1 bears the N-acetylserine mark.

The protein belongs to the avian keratin family. As to quaternary structure, the avian keratins (F-ker, S-ker, C-ker and B-ker) are a complex mixture of very similar polypeptides.

This is Feather keratin B-4 from Columba livia (Rock dove).